An 808-amino-acid chain; its full sequence is Potassium transporter 5 (808 aa).

The Cytoplasmic portion of the chain corresponds to 1 to 65; it reads MAEEVGETRG…NQVNWKKTLS (65 aa). A helical transmembrane segment spans residues 66–86; sequence LTFQSIGVVYGDIGTSPLYVY. Topologically, residues 87-102 are extracellular; the sequence is ESTFPDKIGSKEDILG. The helical transmembrane segment at 103 to 123 threads the bilayer; that stretch reads VLSLIIYTLVLLPMLKYVFIV. The Cytoplasmic portion of the chain corresponds to 124–189; that stretch reads LRANDNGDGG…EKMENSKNIK (66 aa). A helical membrane pass occupies residues 190–210; sequence ILLFLVTILGTSMVIGDGVLT. At 211 to 221 the chain is on the extracellular side; it reads PCISVLSAVSG. A helical transmembrane segment spans residues 222 to 242; sequence IGSLGQDAVVGISIAILIVLF. At 243–251 the chain is on the cytoplasmic side; it reads CAQRLGTDK. The chain crosses the membrane as a helical span at residues 252 to 272; it reads VGFSFAPIILLWFSFIGGIGL. The Extracellular portion of the chain corresponds to 273-302; that stretch reads YNLFKYDVSVLRAFNPKYMFDYFKRNGKQG. A helical membrane pass occupies residues 303–323; sequence WISLGGVVLAVTGTEAMFADL. Over 324–327 the chain is Cytoplasmic; sequence GHFN. A helical membrane pass occupies residues 328–348; the sequence is VQAIQISFSGIVFPALLCAYA. Residues 349–379 lie on the Extracellular side of the membrane; it reads GQAAYLTKFPDDVSKTFYKSIPDPLYWPTFV. A helical membrane pass occupies residues 380–400; the sequence is VAVAAAIIASQAMISGAFAII. Residues 401–424 are Cytoplasmic-facing; it reads SQSLSLGCFPRVKVIHTSAKYEGQ. The chain crosses the membrane as a helical span at residues 425 to 445; the sequence is VYIPEVNYILMIACIMVCLGF. Topologically, residues 446–456 are extracellular; the sequence is KTTEKIGNAYG. The chain crosses the membrane as a helical span at residues 457-477; sequence IAVVAVMVITTCMVTIIMLVV. Residues 478–482 lie on the Cytoplasmic side of the membrane; that stretch reads WRTKM. A helical membrane pass occupies residues 483–503; the sequence is IWIAFFFFGFICIEAVYLSSV. The Extracellular segment spans residues 504–510; the sequence is LYKFKDG. Residues 511–531 form a helical membrane-spanning segment; the sequence is GFLPLAFSFFLMIIMGIWHYI. Over 532 to 808 the chain is Cytoplasmic; it reads HKERYMYELK…LLRVGMTYEI (277 aa). The segment at 699–722 is disordered; that stretch reads LQQPNPSRVSSGSIHSNSGIKSTK.

It belongs to the HAK/KUP transporter (TC 2.A.72.3) family. In terms of tissue distribution, expressed in the roots.

It is found in the cell membrane. The enzyme catalyses K(+)(in) = K(+)(out). In terms of biological role, high-affinity potassium transporter that functions under low potassium conditions. Involved in the positive regulation of salt tolerance under salt stress. This is Potassium transporter 5 from Manihot esculenta (Cassava).